A 314-amino-acid chain; its full sequence is ATP synthase gamma chain (314 aa).

It belongs to the ATPase gamma chain family. In terms of assembly, F-type ATPases have 2 components, CF(1) - the catalytic core - and CF(0) - the membrane proton channel. CF(1) has five subunits: alpha(3), beta(3), gamma(1), delta(1), epsilon(1). CF(0) has three main subunits: a, b and c.

The protein localises to the cell membrane. Functionally, produces ATP from ADP in the presence of a proton gradient across the membrane. The gamma chain is believed to be important in regulating ATPase activity and the flow of protons through the CF(0) complex. The sequence is that of ATP synthase gamma chain from Lactiplantibacillus plantarum (strain ATCC BAA-793 / NCIMB 8826 / WCFS1) (Lactobacillus plantarum).